Reading from the N-terminus, the 758-residue chain is Vitamin K-dependent gamma-carboxylase (758 aa).

The interval 1 to 22 (MAVSAGSARTSPSSDKVQKDKA) is disordered. The residue at position 2 (Ala2) is an N-acetylalanine. At 2–60 (AVSAGSARTSPSSDKVQKDKAELISGPRQDSRIGKLLGFEWTDLSSWRRLVTLLNRPTD) the chain is on the cytoplasmic side. A helical membrane pass occupies residues 61–81 (PASLAVFRFLFGFLMVLDIPQ). Residues 82-113 (ERGLSSLDRKYLDGLDVCRFPLLDALRPLPLD) are Lumenal-facing. Cys99 and Cys450 are joined by a disulfide. Residues 114 to 134 (WMYLVYTIMFLGALGMMLGLC) form a helical membrane-spanning segment. Over 135–136 (YR) the chain is Cytoplasmic. Residues 137–157 (ISCVLFLLPYWYVFLLDKTSW) form a helical membrane-spanning segment. Residues 158–292 (NNHSYLYGLL…VSYFHCMNSQ (135 aa)) are Lumenal-facing. Residue Lys218 is the Proton acceptor of the active site. The chain crosses the membrane as a helical span at residues 293-313 (LFSIGMFSYVMLASSPLFCSP). The Cytoplasmic portion of the chain corresponds to 314–361 (EWPRKLVSYCPRRLQQLLPLKAAPQPSVSCVYKRSRGKSGQKPGLRHQ). A helical membrane pass occupies residues 362–382 (LGAAFTLLYLLEQLFLPYSHF). Residues 383–758 (LTQGYNNWTN…SNPDPVHSEF (376 aa)) lie on the Lumenal side of the membrane. Residues Asn459 and Asn550 are each glycosylated (N-linked (GlcNAc...) asparagine). The segment at 732–758 (GELNPSNTDSSHSNPPESNPDPVHSEF) is disordered. The span at 735–747 (NPSNTDSSHSNPP) shows a compositional bias: polar residues.

This sequence belongs to the vitamin K-dependent gamma-carboxylase family. As to quaternary structure, monomer. May interact with CALU.

Its subcellular location is the endoplasmic reticulum membrane. It catalyses the reaction 4-carboxy-L-glutamyl-[protein] + 2,3-epoxyphylloquinone + H2O + H(+) = phylloquinol + L-glutamyl-[protein] + CO2 + O2. Functionally, mediates the vitamin K-dependent carboxylation of glutamate residues to calcium-binding gamma-carboxyglutamate (Gla) residues with the concomitant conversion of the reduced hydroquinone form of vitamin K to vitamin K epoxide. Catalyzes gamma-carboxylation of various proteins, such as blood coagulation factors (F2, F7, F9 and F10), osteocalcin (BGLAP) or matrix Gla protein (MGP). In Homo sapiens (Human), this protein is Vitamin K-dependent gamma-carboxylase (GGCX).